Reading from the N-terminus, the 101-residue chain is Osteocalcin (101 aa).

The N-terminal stretch at 1–18 (MKLAIVLLLLGLAVLCLG) is a signal peptide. Positions 19-52 (GKDSQHSASAGDSRSSEAFISRQDSANFARRHKR) are excised as a propeptide. The Gla domain maps to 53-99 (SYRYNVARGAAVTSPLESQREVCELNPDCDELADHIGFQEAYRRFYG). Ca(2+)-binding residues include Glu-69, Glu-73, Glu-76, and Asp-82. Residues Glu-69, Glu-73, and Glu-76 each carry the 4-carboxyglutamate modification. Residues Cys-75 and Cys-81 are joined by a disulfide bond.

The protein belongs to the osteocalcin/matrix Gla protein family. Post-translationally, gamma-carboxyglutamate residues are formed by vitamin K dependent carboxylation by GGCX. These residues are essential for the binding of calcium.

It is found in the secreted. Functionally, the carboxylated form is one of the main organic components of the bone matrix, which constitutes 1-2% of the total bone protein. The carboxylated form binds strongly to apatite and calcium. In Xenopus tropicalis (Western clawed frog), this protein is Osteocalcin (bglap).